A 649-amino-acid chain; its full sequence is Ubiquitin-associated and SH3 domain-containing protein B (649 aa).

A Phosphoserine modification is found at serine 20. Position 23 is a phosphothreonine (threonine 23). Residues 27–76 form the UBA domain; sequence NRQQRPGTIKHGSALDVLLSMGFPRARAQKALASTGGRSVQAACDWLFSH. The region spanning 254–319 is the SH3 domain; the sequence is ANHETLQVIY…PENYITKADE (66 aa). Residues 380–649 form a protein tyrosine phosphatase region; that stretch reads GPQKRCLFVC…FNWRETLLQE (270 aa). Arginine 390 is an active-site residue. Histidine 391 (tele-phosphohistidine intermediate) is an active-site residue. The active site involves histidine 576.

In terms of assembly, homodimer. Interacts with JAK2 (in vitro). Interacts with CBL. Part of a complex containing CBL and activated EGFR. Interacts with ubiquitin and with mono-ubiquitinated proteins. Interacts with ZAP70 (ubiquitinated form).

It localises to the cytoplasm. It is found in the nucleus. The enzyme catalyses O-phospho-L-tyrosyl-[protein] + H2O = L-tyrosyl-[protein] + phosphate. In terms of biological role, interferes with CBL-mediated down-regulation and degradation of receptor-type tyrosine kinases. Promotes accumulation of activated target receptors, such as T-cell receptors and EGFR, on the cell surface. Exhibits tyrosine phosphatase activity toward several substrates including EGFR, FAK, SYK, and ZAP70. Down-regulates proteins that are dually modified by both protein tyrosine phosphorylation and ubiquitination. The sequence is that of Ubiquitin-associated and SH3 domain-containing protein B (UBASH3B) from Homo sapiens (Human).